We begin with the raw amino-acid sequence, 503 residues long: MEEFQGYLELYRSQQHDFLYPLIFREYIYALAHDRGLNRSVLLDNVGYDKKSSLLIIKRLISRMYQQNHFIISVNDSNQNKFFGYNKNLYSQMISEGFAVIVEIPFSLRLVSSLEETETVKSYNLRSIHSIFPFFEDKFPHLNYASDVLIPYPIHLEILVQTLRYCVKDPSSLHLLRLFLHEYYNWNTLITPKKSIFAKSNQRLFLLLYNSYVCEYESILLFLRNQSNHLRLTSSGILFERIRFYEKIKYPVEEVFANDFPATLWFFKDPFIQYVRYQGKSILASKDTPLLMNKWKYYLVHFWQCHFYVWSQPGRIHINQLSKHSFDFLGYLSSIRPNISVVRSQLLENSFLMDNAMKKLDTLFPIIPMIGSLAKVKFCNTSGHPISKSSWADSSDSDIIDRFVRIGGNLSHYYSGSSKKKSLYRIKYILRLSCVKTLARKHKSTVRTFLKRLGPKLLDEFFTEEEQIFSLLFPRTSSTLKRFYRGRIWYLDILCINDLVNHE.

Belongs to the intron maturase 2 family. MatK subfamily.

It localises to the plastid. It is found in the chloroplast. Usually encoded in the trnK tRNA gene intron. Probably assists in splicing its own and other chloroplast group II introns. The protein is Maturase K of Rosa canina (Dog rose).